Here is a 110-residue protein sequence, read N- to C-terminus: Protein NATD1 (110 aa).

In terms of domain architecture, N-acetyltransferase spans 19–109 (EHDRKRRQFT…PLPQYLEHLQ (91 aa)).

The protein belongs to the NATD1 family.

This is Protein NATD1 (NATD1) from Gallus gallus (Chicken).